The sequence spans 628 residues: Forkhead box protein O (628 aa).

5 disordered regions span residues 39–77 (RARS…DSQQ), 182–205 (KSVR…RAKK), 217–269 (GLND…RLSP), 316–359 (QQQG…APGY), and 389–415 (NSVT…YSNV). Thr44 is modified (phosphothreonine; by PKB/AKT1). Residues 63–77 (TKASNQQLAPGDSQQ) show a composition bias toward polar residues. Phosphoserine is present on Ser75. The segment at residues 95–201 (WGNLSYADLI…ETSRYEKRRG (107 aa)) is a DNA-binding region (fork-head). Ser190 carries the post-translational modification Phosphoserine; by PKB/AKT1. 2 stretches are compositionally biased toward polar residues: residues 221 to 230 (ATPSPSSSVS) and 256 to 265 (RASSNASSCG). Ser259 carries the phosphoserine; by PKB/AKT1 modification. Residues Ser262, Ser263, and Ser268 each carry the phosphoserine modification. Residues 328–337 (SQPPPPPYQP) show a composition bias toward pro residues. A compositionally biased stretch (low complexity) spans 338–351 (PQHQQAQQQQSPYA). The span at 402–414 (SEPSSDSLNTYSN) shows a compositional bias: polar residues.

In terms of assembly, interacts with melt.

The protein resides in the cytoplasm. It is found in the nucleus. Its function is as follows. Transcription factor involved in the regulation of the insulin signaling pathway. Consistently activates both the downstream target Thor\d4EBP and the feedback control target InR. Involved in negative regulation of the cell cycle, modulating cell growth and proliferation. In response to cellular stresses, such as nutrient deprivation or increased levels of reactive oxygen species, foxo is activated and inhibits growth through the action of target genes such as Thor. Foxo activated in the adult fat body can regulate lifespan in adults; an insulin peptide itself may function as one secondary messenger of insulin-regulated aging. Also regulates Lip4, homolog of human acid lipases, thereby acting as a key modulator of lipid metabolism by insulin signaling and integrates insulin responses to glucose and lipid homeostasis. In Drosophila yakuba (Fruit fly), this protein is Forkhead box protein O.